The following is a 342-amino-acid chain: Non-homologous end-joining protein 1 (342 aa).

2 consecutive transmembrane segments (helical) span residues 27–47 and 129–149; these read LLLF…LVSL and MFYM…NLST. Residues 173–342 are interaction with LIF1; the sequence is LRDLDGGSKV…RKFGKVRIKN (170 aa). Residues 270–342 are disordered; the sequence is ADPTNEARPN…RKFGKVRIKN (73 aa). The span at 286 to 296 shows a compositional bias: basic and acidic residues; that stretch reads PKTDFKPKSRE. Over residues 297 to 312 the composition is skewed to polar residues; sequence SSTSSQLRLENFSESE. Basic residues predominate over residues 331–342; sequence KKRKFGKVRIKN.

It belongs to the XRCC4-XLF family. XLF subfamily. As to quaternary structure, interacts (via C-terminus) with LIF1 (via N-terminus); the interaction is direct. Interacts with DNL4.

The protein localises to the cytoplasm. The protein resides in the nucleus membrane. In terms of biological role, involved in non-homologous end joining (NHEJ). Facilitates the transport of LIF1 into the nucleus, where it can interact with DNA ligase DNL4 to repair double-strand breaks (DSB). Mediates mating-type regulation of NHEJ. Prevents chromosome circularisation by NHEJ in absence of telomerase. This chain is Non-homologous end-joining protein 1 (NEJ1), found in Saccharomyces cerevisiae (strain ATCC 204508 / S288c) (Baker's yeast).